We begin with the raw amino-acid sequence, 200 residues long: Putative 3-methyladenine DNA glycosylase (200 aa).

This sequence belongs to the DNA glycosylase MPG family.

In Methanocella arvoryzae (strain DSM 22066 / NBRC 105507 / MRE50), this protein is Putative 3-methyladenine DNA glycosylase.